The chain runs to 299 residues: DNA repair protein RecO (299 aa).

A disordered region spans residues 1-62 (MTLNSDADPD…GRRAPRTPAS (62 aa)). Low complexity predominate over residues 25–41 (ASKPARSTRKSSSAKSA).

Belongs to the RecO family.

In terms of biological role, involved in DNA repair and RecF pathway recombination. The sequence is that of DNA repair protein RecO from Paraburkholderia xenovorans (strain LB400).